Here is a 303-residue protein sequence, read N- to C-terminus: Methionine import ATP-binding protein MetN (303 aa).

Positions 1–222 (MLDQISLEIP…PDPKMRHFLG (222 aa)) constitute an ABC transporter domain. 19-26 (GHSGAGKS) contributes to the ATP binding site.

Belongs to the ABC transporter superfamily. Methionine importer (TC 3.A.1.24) family. As to quaternary structure, the complex is composed of two ATP-binding proteins (MetN), two transmembrane proteins (MetI) and a solute-binding protein (MetQ).

The protein resides in the cell inner membrane. It carries out the reaction L-methionine(out) + ATP + H2O = L-methionine(in) + ADP + phosphate + H(+). The enzyme catalyses D-methionine(out) + ATP + H2O = D-methionine(in) + ADP + phosphate + H(+). Part of the ABC transporter complex MetNIQ involved in methionine import. Responsible for energy coupling to the transport system. In Wolinella succinogenes (strain ATCC 29543 / DSM 1740 / CCUG 13145 / JCM 31913 / LMG 7466 / NCTC 11488 / FDC 602W) (Vibrio succinogenes), this protein is Methionine import ATP-binding protein MetN.